The primary structure comprises 236 residues: Urease accessory protein UreF (236 aa).

This sequence belongs to the UreF family. UreD, UreF and UreG form a complex that acts as a GTP-hydrolysis-dependent molecular chaperone, activating the urease apoprotein by helping to assemble the nickel containing metallocenter of UreC. The UreE protein probably delivers the nickel.

It localises to the cytoplasm. Required for maturation of urease via the functional incorporation of the urease nickel metallocenter. The polypeptide is Urease accessory protein UreF (Synechocystis sp. (strain ATCC 27184 / PCC 6803 / Kazusa)).